A 554-amino-acid chain; its full sequence is CTP synthase (554 aa).

The interval 1–270 is amidoligase domain; that stretch reads MTKFVFVTGG…DRIICEELRI (270 aa). Serine 13 contributes to the CTP binding site. Position 13 (serine 13) interacts with UTP. Residues 14-19 and aspartate 71 contribute to the ATP site; that span reads SLGKGI. The Mg(2+) site is built by aspartate 71 and glutamate 144. Residues 151–153, 191–196, and lysine 227 each bind CTP; these read DIE and KTKPTQ. Residues 191 to 196 and lysine 227 contribute to the UTP site; that span reads KTKPTQ. A Glutamine amidotransferase type-1 domain is found at 295–547; that stretch reads TIGMVGKYVD…VEAALAHRQR (253 aa). Glycine 356 is a binding site for L-glutamine. The Nucleophile; for glutamine hydrolysis role is filled by cysteine 383. L-glutamine-binding positions include 384–387, glutamate 407, and arginine 473; that span reads LGMQ. Catalysis depends on residues histidine 520 and glutamate 522.

Belongs to the CTP synthase family. In terms of assembly, homotetramer.

The enzyme catalyses UTP + L-glutamine + ATP + H2O = CTP + L-glutamate + ADP + phosphate + 2 H(+). The catalysed reaction is L-glutamine + H2O = L-glutamate + NH4(+). It catalyses the reaction UTP + NH4(+) + ATP = CTP + ADP + phosphate + 2 H(+). It participates in pyrimidine metabolism; CTP biosynthesis via de novo pathway; CTP from UDP: step 2/2. Allosterically activated by GTP, when glutamine is the substrate; GTP has no effect on the reaction when ammonia is the substrate. The allosteric effector GTP functions by stabilizing the protein conformation that binds the tetrahedral intermediate(s) formed during glutamine hydrolysis. Inhibited by the product CTP, via allosteric rather than competitive inhibition. In terms of biological role, catalyzes the ATP-dependent amination of UTP to CTP with either L-glutamine or ammonia as the source of nitrogen. Regulates intracellular CTP levels through interactions with the four ribonucleotide triphosphates. This is CTP synthase from Ralstonia nicotianae (strain ATCC BAA-1114 / GMI1000) (Ralstonia solanacearum).